The following is a 326-amino-acid chain: Aspartate carbamoyltransferase catalytic subunit (326 aa).

Carbamoyl phosphate-binding residues include R55 and T56. K83 is an L-aspartate binding site. The carbamoyl phosphate site is built by R105, H135, and Q138. L-aspartate contacts are provided by R176 and R230. The carbamoyl phosphate site is built by G271 and P272.

This sequence belongs to the aspartate/ornithine carbamoyltransferase superfamily. ATCase family. As to quaternary structure, heterododecamer (2C3:3R2) of six catalytic PyrB chains organized as two trimers (C3), and six regulatory PyrI chains organized as three dimers (R2).

It catalyses the reaction carbamoyl phosphate + L-aspartate = N-carbamoyl-L-aspartate + phosphate + H(+). The protein operates within pyrimidine metabolism; UMP biosynthesis via de novo pathway; (S)-dihydroorotate from bicarbonate: step 2/3. Catalyzes the condensation of carbamoyl phosphate and aspartate to form carbamoyl aspartate and inorganic phosphate, the committed step in the de novo pyrimidine nucleotide biosynthesis pathway. The sequence is that of Aspartate carbamoyltransferase catalytic subunit from Streptomyces coelicolor (strain ATCC BAA-471 / A3(2) / M145).